The chain runs to 269 residues: MATH domain and coiled-coil domain-containing protein At2g01790 (269 aa).

In terms of domain architecture, MATH spans 6-134; the sequence is AVKKLWVINN…NGEVDIVAEV (129 aa). A coiled-coil region spans residues 228-269; it reads KLDWLEKKLKETGKSRLQEIEEDLKDLKVKCADMDALLEFLR.

The polypeptide is MATH domain and coiled-coil domain-containing protein At2g01790 (Arabidopsis thaliana (Mouse-ear cress)).